We begin with the raw amino-acid sequence, 220 residues long: Peptidyl-tRNA hydrolase (220 aa).

Tyr-14 lines the tRNA pocket. The Proton acceptor role is filled by His-19. 3 residues coordinate tRNA: Phe-60, Asn-62, and Asn-106.

It belongs to the PTH family. As to quaternary structure, monomer.

The protein localises to the cytoplasm. It carries out the reaction an N-acyl-L-alpha-aminoacyl-tRNA + H2O = an N-acyl-L-amino acid + a tRNA + H(+). Hydrolyzes ribosome-free peptidyl-tRNAs (with 1 or more amino acids incorporated), which drop off the ribosome during protein synthesis, or as a result of ribosome stalling. Its function is as follows. Catalyzes the release of premature peptidyl moieties from peptidyl-tRNA molecules trapped in stalled 50S ribosomal subunits, and thus maintains levels of free tRNAs and 50S ribosomes. The polypeptide is Peptidyl-tRNA hydrolase (Campylobacter hominis (strain ATCC BAA-381 / DSM 21671 / CCUG 45161 / LMG 19568 / NCTC 13146 / CH001A)).